Here is a 282-residue protein sequence, read N- to C-terminus: BTB/POZ domain-containing protein At3g56230 (282 aa).

Residues 40-50 (GSKEDRHDKSN) show a composition bias toward basic and acidic residues. The segment at 40 to 66 (GSKEDRHDKSNHNSTINNGSSISSSPL) is disordered. The segment covering 51 to 64 (HNSTINNGSSISSS) has biased composition (low complexity). The region spanning 111–181 (ADILLKPGDD…LYTGTLASDK (71 aa)) is the BTB domain.

It participates in protein modification; protein ubiquitination. Functionally, may act as a substrate-specific adapter of an E3 ubiquitin-protein ligase complex (CUL3-RBX1-BTB) which mediates the ubiquitination and subsequent proteasomal degradation of target proteins. In Arabidopsis thaliana (Mouse-ear cress), this protein is BTB/POZ domain-containing protein At3g56230.